Reading from the N-terminus, the 497-residue chain is NAD(P)H-quinone oxidoreductase chain 4, chloroplastic (497 aa).

14 helical membrane passes run 5–25 (VPWL…IPIL), 36–56 (YTLG…YCHF), 88–108 (LGLV…AWPI), 112–132 (TRLF…LFVS), 135–155 (ILLF…LLCL), 168–188 (FVLY…TMSF), 212–232 (VLIY…FPFH), 243–263 (HYST…YGLI), 275–295 (FLLG…ASLI), 306–326 (IAYS…SFTE), 331–351 (GAIL…FLAG), 387–407 (LALP…GVVT), 418–438 (GITV…LSML), and 463–483 (LFIL…PNLI).

The protein belongs to the complex I subunit 4 family.

The protein localises to the plastid. Its subcellular location is the chloroplast thylakoid membrane. The enzyme catalyses a plastoquinone + NADH + (n+1) H(+)(in) = a plastoquinol + NAD(+) + n H(+)(out). It catalyses the reaction a plastoquinone + NADPH + (n+1) H(+)(in) = a plastoquinol + NADP(+) + n H(+)(out). This chain is NAD(P)H-quinone oxidoreductase chain 4, chloroplastic, found in Adiantum capillus-veneris (Maidenhair fern).